A 197-amino-acid polypeptide reads, in one-letter code: Isopentenyl-diphosphate Delta-isomerase (197 aa).

Residues His-41 and His-48 each contribute to the Mn(2+) site. Residues 46–183 (RLHRAFSVFL…AWFMTVLDAA (138 aa)) enclose the Nudix hydrolase domain. The active site involves Cys-83. Cys-83 contributes to the Mg(2+) binding site. His-85 provides a ligand contact to Mn(2+). Glu-103 is a binding site for Mg(2+). Glu-130 and Glu-132 together coordinate Mn(2+). Glu-132 is a catalytic residue.

Belongs to the IPP isomerase type 1 family. Mg(2+) is required as a cofactor. The cofactor is Mn(2+).

It localises to the cytoplasm. It carries out the reaction isopentenyl diphosphate = dimethylallyl diphosphate. It participates in isoprenoid biosynthesis; dimethylallyl diphosphate biosynthesis; dimethylallyl diphosphate from isopentenyl diphosphate: step 1/1. In terms of biological role, catalyzes the 1,3-allylic rearrangement of the homoallylic substrate isopentenyl (IPP) to its highly electrophilic allylic isomer, dimethylallyl diphosphate (DMAPP). The protein is Isopentenyl-diphosphate Delta-isomerase of Streptomyces coelicolor (strain ATCC BAA-471 / A3(2) / M145).